The sequence spans 198 residues: Endonuclease V (198 aa).

Mg(2+) is bound by residues D38 and D101.

Belongs to the endonuclease V family. Requires Mg(2+) as cofactor.

It localises to the cytoplasm. The catalysed reaction is Endonucleolytic cleavage at apurinic or apyrimidinic sites to products with a 5'-phosphate.. DNA repair enzyme involved in the repair of deaminated bases. Selectively cleaves double-stranded DNA at the second phosphodiester bond 3' to a deoxyinosine leaving behind the intact lesion on the nicked DNA. This is Endonuclease V from Saccharolobus islandicus (strain Y.N.15.51 / Yellowstone #2) (Sulfolobus islandicus).